The primary structure comprises 100 residues: UPF0125 protein CV_3462 (100 aa).

This sequence belongs to the UPF0125 (RnfH) family.

The polypeptide is UPF0125 protein CV_3462 (Chromobacterium violaceum (strain ATCC 12472 / DSM 30191 / JCM 1249 / CCUG 213 / NBRC 12614 / NCIMB 9131 / NCTC 9757 / MK)).